The sequence spans 905 residues: Catenin alpha-2 (905 aa).

Thr-632 is subject to Phosphothreonine. 3 positions are modified to phosphoserine: Ser-640, Ser-651, and Ser-853. Basic and acidic residues predominate over residues Val-869 to Thr-879. Positions Val-869–Ser-891 are disordered. Residues Arg-880 to Ile-890 are compositionally biased toward basic residues. Ser-891 bears the Phosphoserine mark.

The protein belongs to the vinculin/alpha-catenin family. Interacts with CDH1 and CDH2. Interacts with ZNF639; recruits CTNNA2 to the nucleus. Interacts with F-actin.

Its subcellular location is the cell membrane. It localises to the cytoplasm. It is found in the cytoskeleton. The protein localises to the cell junction. The protein resides in the adherens junction. Its subcellular location is the cell projection. It localises to the axon. It is found in the nucleus. May function as a linker between cadherin adhesion receptors and the cytoskeleton to regulate cell-cell adhesion and differentiation in the nervous system. Required for proper regulation of cortical neuronal migration and neurite growth. It acts as a negative regulator of Arp2/3 complex activity and Arp2/3-mediated actin polymerization. It thereby suppresses excessive actin branching which would impair neurite growth and stability. Regulates morphological plasticity of synapses and cerebellar and hippocampal lamination during development. Functions in the control of startle modulation. The chain is Catenin alpha-2 (CTNNA2) from Pongo abelii (Sumatran orangutan).